The sequence spans 529 residues: MNNNDLVAKLWKLCDNLRDGGVSYQNYVNELASLLFLKMCKETGQEADYLPEGYRWDDLKSRIGQDQMQFYRNLLVQLGSDEKKLVQAVFHNVSTTIEQPKQLTELVSYMDALDWYNGNHGKSRDDFGDMYEGLLQKNANETKSGAGQYFTPRPLIKTIIHLLKPQPREVVQDPAAGTAGFLIEADRYVKSQTNDLDDLDGDTQDFQIHRAFIGLELVPGTRRLALMNCLLHDIEGNLDHGGAIRLGNTLGSDGENLPKAHIVATNPPFGSAAGTNITRTFVHPTSNKQLCFMQHIIETLHPGGRAAVVVPDNVLFEGGKGTDIRRDLMDKCHLHTILRLPTGIFYAQGVKTNVLFFTKGTVTNPHQDKNCTDDVWVYDLRTNMPSFGKRTPFTEQHLQPFETVYGEDPHGLSPREEGEWSFNAEESEVADSEENKNTDQHQATSRWRKFSREWIRSAKSDSLDISWLKDKDSIDADSLPEPDVLAAEAMGELVQALGELDALMRELGAGDEADAQRQLLNEAFGEVKA.

Residues 148–153 (QYFTPR), 178–180 (TAG), and Glu216 each bind S-adenosyl-L-methionine. The disordered stretch occupies residues 405–444 (YGEDPHGLSPREEGEWSFNAEESEVADSEENKNTDQHQAT). Residues 407–418 (EDPHGLSPREEG) show a composition bias toward basic and acidic residues.

The protein belongs to the N(4)/N(6)-methyltransferase family. In terms of assembly, the type I restriction/modification system is composed of three polypeptides R, M and S; the restriction enzyme has stoichiometry R(2)M(2)S(1) while the methyltransferase is M(2)S(1).

It catalyses the reaction a 2'-deoxyadenosine in DNA + S-adenosyl-L-methionine = an N(6)-methyl-2'-deoxyadenosine in DNA + S-adenosyl-L-homocysteine + H(+). Its function is as follows. The subtype gamma methyltransferase (M) subunit of a type I restriction enzyme. The M and S subunits together form a methyltransferase (MTase) that methylates two adenine residues of the sequence 5'-GAGN(6)GTRC-3'. In the presence of the R subunit the complex can also act as an endonuclease, binding to the same target sequence but cutting the DNA some distance from this site. Whether the DNA is cut or modified depends on the methylation state of the target sequence. When the target site is unmodified, the DNA is cut. When the target site is hemimethylated, the complex acts as a maintenance MTase modifying the DNA so that both strands become methylated. After locating a non-methylated recognition site, the enzyme complex serves as a molecular motor that translocates DNA in an ATP-dependent manner until a collision occurs that triggers cleavage. The polypeptide is Type I restriction enzyme StySJI methylase subunit (Salmonella typhimurium (strain LT2 / SGSC1412 / ATCC 700720)).